Here is a 311-residue protein sequence, read N- to C-terminus: Glutaminase (311 aa).

7 residues coordinate substrate: Ser-66, Asn-116, Glu-162, Asn-169, Tyr-193, Tyr-245, and Val-263.

The protein belongs to the glutaminase family. Homotetramer.

It catalyses the reaction L-glutamine + H2O = L-glutamate + NH4(+). This is Glutaminase from Rhodopseudomonas palustris (strain TIE-1).